The chain runs to 172 residues: Exocyst complex component 1-like (172 aa).

This chain is Exocyst complex component 1-like, found in Mus musculus (Mouse).